We begin with the raw amino-acid sequence, 247 residues long: Coproheme decarboxylase (247 aa).

Fe-coproporphyrin III is bound by residues arginine 129, tyrosine 143–lysine 147, histidine 170, glutamine 183, and serine 221. Tyrosine 143 is an active-site residue.

The protein belongs to the ChdC family. Type 1 subfamily. Fe-coproporphyrin III is required as a cofactor.

It catalyses the reaction Fe-coproporphyrin III + 2 H2O2 + 2 H(+) = heme b + 2 CO2 + 4 H2O. The catalysed reaction is Fe-coproporphyrin III + H2O2 + H(+) = harderoheme III + CO2 + 2 H2O. The enzyme catalyses harderoheme III + H2O2 + H(+) = heme b + CO2 + 2 H2O. Its pathway is porphyrin-containing compound metabolism; protoheme biosynthesis. Its function is as follows. Involved in coproporphyrin-dependent heme b biosynthesis. Catalyzes the decarboxylation of Fe-coproporphyrin III (coproheme) to heme b (protoheme IX), the last step of the pathway. The reaction occurs in a stepwise manner with a three-propionate intermediate. This Bacillus cereus (strain ATCC 10987 / NRS 248) protein is Coproheme decarboxylase.